A 343-amino-acid chain; its full sequence is S-adenosylmethionine:tRNA ribosyltransferase-isomerase (343 aa).

It belongs to the QueA family. As to quaternary structure, monomer.

Its subcellular location is the cytoplasm. The catalysed reaction is 7-aminomethyl-7-carbaguanosine(34) in tRNA + S-adenosyl-L-methionine = epoxyqueuosine(34) in tRNA + adenine + L-methionine + 2 H(+). It functions in the pathway tRNA modification; tRNA-queuosine biosynthesis. Its function is as follows. Transfers and isomerizes the ribose moiety from AdoMet to the 7-aminomethyl group of 7-deazaguanine (preQ1-tRNA) to give epoxyqueuosine (oQ-tRNA). This Borreliella burgdorferi (strain ATCC 35210 / DSM 4680 / CIP 102532 / B31) (Borrelia burgdorferi) protein is S-adenosylmethionine:tRNA ribosyltransferase-isomerase.